The sequence spans 254 residues: Pyruvate dehydrogenase complex repressor (254 aa).

Residues 9-77 (PKLSDVIEQQ…QGGGTFVQSS (69 aa)) enclose the HTH gntR-type domain. A DNA-binding region (H-T-H motif) is located at residues 37–56 (ERELAKQFDVSRPSLREAIQ).

Transcriptional repressor for the pyruvate dehydrogenase complex genes aceEF and lpd. In Escherichia coli O6:H1 (strain CFT073 / ATCC 700928 / UPEC), this protein is Pyruvate dehydrogenase complex repressor (pdhR).